Reading from the N-terminus, the 113-residue chain is Hydrogenase maturation factor HypA (113 aa).

His2 lines the Ni(2+) pocket. Zn(2+) contacts are provided by Cys73, Cys76, Cys89, and Cys92.

Belongs to the HypA/HybF family.

Its function is as follows. Involved in the maturation of [NiFe] hydrogenases. Required for nickel insertion into the metal center of the hydrogenase. The polypeptide is Hydrogenase maturation factor HypA (Azotobacter chroococcum mcd 1).